Here is a 256-residue protein sequence, read N- to C-terminus: Thiazole synthase (256 aa).

Catalysis depends on Lys95, which acts as the Schiff-base intermediate with DXP. 1-deoxy-D-xylulose 5-phosphate is bound by residues Gly156, 182–183 (AG), and 204–205 (NT).

Belongs to the ThiG family. In terms of assembly, homotetramer. Forms heterodimers with either ThiH or ThiS.

It localises to the cytoplasm. It carries out the reaction [ThiS sulfur-carrier protein]-C-terminal-Gly-aminoethanethioate + 2-iminoacetate + 1-deoxy-D-xylulose 5-phosphate = [ThiS sulfur-carrier protein]-C-terminal Gly-Gly + 2-[(2R,5Z)-2-carboxy-4-methylthiazol-5(2H)-ylidene]ethyl phosphate + 2 H2O + H(+). Its pathway is cofactor biosynthesis; thiamine diphosphate biosynthesis. Catalyzes the rearrangement of 1-deoxy-D-xylulose 5-phosphate (DXP) to produce the thiazole phosphate moiety of thiamine. Sulfur is provided by the thiocarboxylate moiety of the carrier protein ThiS. In vitro, sulfur can be provided by H(2)S. This is Thiazole synthase from Photobacterium profundum (strain SS9).